We begin with the raw amino-acid sequence, 225 residues long: Peptidyl-tRNA hydrolase (225 aa).

TRNA is bound at residue Tyr14. Residue His19 is the Proton acceptor of the active site. Residues Phe64, Asn66, and Asn112 each contribute to the tRNA site. The tract at residues 187 to 225 (MQPPKPEKPKGEAKPAAPEAPEAAPDTRSALQRLADRFR) is disordered. Residues 200 to 210 (KPAAPEAPEAA) show a composition bias toward low complexity.

It belongs to the PTH family. As to quaternary structure, monomer.

The protein localises to the cytoplasm. It carries out the reaction an N-acyl-L-alpha-aminoacyl-tRNA + H2O = an N-acyl-L-amino acid + a tRNA + H(+). Functionally, hydrolyzes ribosome-free peptidyl-tRNAs (with 1 or more amino acids incorporated), which drop off the ribosome during protein synthesis, or as a result of ribosome stalling. In terms of biological role, catalyzes the release of premature peptidyl moieties from peptidyl-tRNA molecules trapped in stalled 50S ribosomal subunits, and thus maintains levels of free tRNAs and 50S ribosomes. This is Peptidyl-tRNA hydrolase from Cereibacter sphaeroides (strain ATCC 17025 / ATH 2.4.3) (Rhodobacter sphaeroides).